We begin with the raw amino-acid sequence, 252 residues long: Probable transcriptional regulatory protein all4276 (252 aa).

It belongs to the TACO1 family.

It localises to the cytoplasm. This chain is Probable transcriptional regulatory protein all4276, found in Nostoc sp. (strain PCC 7120 / SAG 25.82 / UTEX 2576).